The sequence spans 361 residues: 3-dehydroquinate synthase (361 aa).

NAD(+) is bound by residues 71-76, 105-109, 129-130, Lys142, Lys151, and 169-172; these read DGEQFK, GVIGD, TT, and CLQT. Positions 184, 247, and 264 each coordinate Zn(2+).

This sequence belongs to the sugar phosphate cyclases superfamily. Dehydroquinate synthase family. Co(2+) is required as a cofactor. The cofactor is Zn(2+). NAD(+) serves as cofactor.

It is found in the cytoplasm. The catalysed reaction is 7-phospho-2-dehydro-3-deoxy-D-arabino-heptonate = 3-dehydroquinate + phosphate. Its pathway is metabolic intermediate biosynthesis; chorismate biosynthesis; chorismate from D-erythrose 4-phosphate and phosphoenolpyruvate: step 2/7. In terms of biological role, catalyzes the conversion of 3-deoxy-D-arabino-heptulosonate 7-phosphate (DAHP) to dehydroquinate (DHQ). The sequence is that of 3-dehydroquinate synthase from Edwardsiella ictaluri (strain 93-146).